Here is a 448-residue protein sequence, read N- to C-terminus: Mitochondrial distribution and morphology protein 10 (448 aa).

Disordered regions lie at residues glutamine 101–alanine 126 and proline 366–glutamate 386. Residues asparagine 112–alanine 126 show a composition bias toward basic and acidic residues.

Belongs to the MDM10 family. Component of the ER-mitochondria encounter structure (ERMES) or MDM complex, composed of MMM1, MDM10, MDM12 and MDM34. Associates with the mitochondrial outer membrane sorting assembly machinery SAM(core) complex.

It localises to the mitochondrion outer membrane. Functionally, component of the ERMES/MDM complex, which serves as a molecular tether to connect the endoplasmic reticulum and mitochondria. Components of this complex are involved in the control of mitochondrial shape and protein biogenesis and may function in phospholipid exchange. MDM10 is involved in the late assembly steps of the general translocase of the mitochondrial outer membrane (TOM complex). Functions in the TOM40-specific route of the assembly of outer membrane beta-barrel proteins, including the association of TOM40 with the receptor TOM22 and small TOM proteins. Can associate with the SAM(core) complex as well as the MDM12-MMM1 complex, both involved in late steps of the major beta-barrel assembly pathway, that is responsible for biogenesis of all outer membrane beta-barrel proteins. May act as a switch that shuttles between both complexes and channels precursor proteins into the TOM40-specific pathway. Plays a role in mitochondrial morphology and in the inheritance of mitochondria. The polypeptide is Mitochondrial distribution and morphology protein 10 (Coccidioides immitis (strain RS) (Valley fever fungus)).